Reading from the N-terminus, the 208-residue chain is 7-carboxy-7-deazaguanine synthase (208 aa).

Substrate is bound by residues Leu-23 to Gly-25 and Arg-38. Residues Trp-29–Arg-208 form the Radical SAM core domain. Residues Cys-42, Cys-46, and Cys-49 each coordinate [4Fe-4S] cluster. A substrate-binding site is contributed by Thr-83. S-adenosyl-L-methionine contacts are provided by residues Gly-85 and Ser-126–Lys-128.

The protein belongs to the radical SAM superfamily. 7-carboxy-7-deazaguanine synthase family. Homodimer. Requires [4Fe-4S] cluster as cofactor. The cofactor is S-adenosyl-L-methionine. It depends on Mg(2+) as a cofactor.

The enzyme catalyses 6-carboxy-5,6,7,8-tetrahydropterin + H(+) = 7-carboxy-7-deazaguanine + NH4(+). It functions in the pathway purine metabolism; 7-cyano-7-deazaguanine biosynthesis. Its function is as follows. Catalyzes the complex heterocyclic radical-mediated conversion of 6-carboxy-5,6,7,8-tetrahydropterin (CPH4) to 7-carboxy-7-deazaguanine (CDG), a step common to the biosynthetic pathways of all 7-deazapurine-containing compounds. The protein is 7-carboxy-7-deazaguanine synthase of Synechocystis sp. (strain ATCC 27184 / PCC 6803 / Kazusa).